A 430-amino-acid polypeptide reads, in one-letter code: Adenylosuccinate synthetase (430 aa).

Residues 12-18 (GDEGKGK) and 40-42 (GHT) each bind GTP. The Proton acceptor role is filled by aspartate 13. The Mg(2+) site is built by aspartate 13 and glycine 40. IMP-binding positions include 13 to 16 (DEGK), 38 to 41 (NAGH), threonine 130, arginine 144, glutamine 224, threonine 239, and arginine 303. Catalysis depends on histidine 41, which acts as the Proton donor. Residue 299–305 (VNTGRKR) participates in substrate binding. Residues arginine 305, 331–333 (KLD), and 413–415 (STS) contribute to the GTP site.

This sequence belongs to the adenylosuccinate synthetase family. As to quaternary structure, homodimer. Mg(2+) serves as cofactor.

The protein localises to the cytoplasm. The enzyme catalyses IMP + L-aspartate + GTP = N(6)-(1,2-dicarboxyethyl)-AMP + GDP + phosphate + 2 H(+). It participates in purine metabolism; AMP biosynthesis via de novo pathway; AMP from IMP: step 1/2. Plays an important role in the de novo pathway of purine nucleotide biosynthesis. Catalyzes the first committed step in the biosynthesis of AMP from IMP. The chain is Adenylosuccinate synthetase from Rhodopseudomonas palustris (strain BisB18).